The sequence spans 106 residues: Probable insulin-like peptide beta-type 2 (106 aa).

The first 15 residues, 1–15, serve as a signal peptide directing secretion; that stretch reads MNAIIFCLLFTTVTA. Residues 16-56 constitute a propeptide that is removed on maturation; that stretch reads TYEVFGKGIEHRNEHLIINQLDIIPVESTPTPNRASRVQKR. Disulfide bonds link cysteine 58-cysteine 86, cysteine 70-cysteine 99, cysteine 73-cysteine 100, and cysteine 85-cysteine 90.

The protein belongs to the insulin family.

It is found in the secreted. The polypeptide is Probable insulin-like peptide beta-type 2 (ins-2) (Caenorhabditis elegans).